Consider the following 258-residue polypeptide: D-beta-hydroxybutyrate dehydrogenase (258 aa).

6-30 contributes to the NAD(+) binding site; that stretch reads VITGSTSGIGLAIARTLAKAGANIV. S140 provides a ligand contact to substrate. Y153 (proton acceptor) is an active-site residue.

This sequence belongs to the short-chain dehydrogenases/reductases (SDR) family.

It carries out the reaction (R)-3-hydroxybutanoate + NAD(+) = acetoacetate + NADH + H(+). The chain is D-beta-hydroxybutyrate dehydrogenase (bdhA) from Rhizobium meliloti (strain 1021) (Ensifer meliloti).